We begin with the raw amino-acid sequence, 283 residues long: Shikimate dehydrogenase (NADP(+)) (283 aa).

Residues 18 to 20 and threonine 66 each bind shikimate; that span reads SYS. Catalysis depends on lysine 70, which acts as the Proton acceptor. Residues asparagine 91 and aspartate 106 each contribute to the shikimate site. NADP(+) is bound by residues 130-134 and methionine 225; that span reads GAGGA. Tyrosine 227 lines the shikimate pocket. Position 248 (glycine 248) interacts with NADP(+).

The protein belongs to the shikimate dehydrogenase family. As to quaternary structure, homodimer.

The enzyme catalyses shikimate + NADP(+) = 3-dehydroshikimate + NADPH + H(+). Its pathway is metabolic intermediate biosynthesis; chorismate biosynthesis; chorismate from D-erythrose 4-phosphate and phosphoenolpyruvate: step 4/7. Involved in the biosynthesis of the chorismate, which leads to the biosynthesis of aromatic amino acids. Catalyzes the reversible NADPH linked reduction of 3-dehydroshikimate (DHSA) to yield shikimate (SA). The chain is Shikimate dehydrogenase (NADP(+)) from Pelodictyon phaeoclathratiforme (strain DSM 5477 / BU-1).